The sequence spans 315 residues: Olfactory receptor 4K3 (315 aa).

The Extracellular portion of the chain corresponds to 1–25 (MAWSNQSAVTEFILRGLSSSLELQI). N5 carries N-linked (GlcNAc...) asparagine glycosylation. A helical transmembrane segment spans residues 26-49 (FYFLFFSIVYAATVLGNLLIVVTI). The Cytoplasmic portion of the chain corresponds to 50 to 57 (ASEPHLHS). A helical membrane pass occupies residues 58–79 (PMYFLLGNLSFIDMSLASFATP). At 80-100 (KMIADFLREHKAISFEGCMTQ) the chain is on the extracellular side. C97 and C189 are joined by a disulfide. Residues 101 to 120 (MFFLHLLGGAEIVLLISMSF) form a helical membrane-spanning segment. Topologically, residues 121-139 (DRYVAICKPLHYLTIMSRR) are cytoplasmic. The helical transmembrane segment at 140-158 (MCVGLVILSWIVGIFHALS) threads the bilayer. Residues 159–195 (QLAFTVNLPFCGPNEVDSFFCDLPLVIKLACVDTYIL) lie on the Extracellular side of the membrane. Residues 196–219 (GVFMISTSGMIALVCFILLVISYT) traverse the membrane as a helical segment. The Cytoplasmic segment spans residues 220–235 (IILVTVRQRSSGGSSK). A helical membrane pass occupies residues 236–258 (ALSTCSAHFTVVTLFFGPCTFIY). The Extracellular segment spans residues 259–269 (VWPFTNFPIDK). Residues 270-289 (VLSVFYTIYTPLLNPVIYTV) traverse the membrane as a helical segment. Topologically, residues 290 to 315 (RNKDVKYSMRKLSSHIFKSRKTDHTP) are cytoplasmic.

It belongs to the G-protein coupled receptor 1 family.

The protein localises to the cell membrane. Odorant receptor. The chain is Olfactory receptor 4K3 (OR4K3) from Homo sapiens (Human).